The following is a 541-amino-acid chain: MEGERMNAFPSTMMDEELNLWDFLERAAALFGRKEVVSRLHTGEVHRTTYAEVYQRARRLMGGLRALGVGVGDRVATLGFNHFRHLEAYFAVPGMGAVLHTANPRLSPKEIAYILNHAEDKVLLFDPNLLPLVEAIRGELKTVQHFVVMDEKAPEGYLAYEEALGEEADPVRVPERAACGMAYTTGTTGLPKGVVYSHRALVLHSLAASLVDGTALSEKDVVLPVVPMFHVNAWCLPYAATLVGAKQVLPGPRLDPASLVELFDGEGVTFTAGVPTVWLALADYLESTGHRLKTLRRLVVGGSAAPRSLIARFERMGVEVRQGYGLTETSPVVVQNFVKSHLESLSEEEKLTLKAKTGLPIPLVRLRVADEEGRPVPKDGKALGEVQLKGPWITGGYYGNEEATRSALTPDGFFRTGDIAVWDEEGYVEIKDRLKDLIKSGGEWISSVDLENALMGHPKVKEAAVVAIPHPKWQERPLAVVVPRGEKPTPEELNEHLLKAGFAKWQLPDAYVFAEEIPRTSAGKFLKRALREQYKNYYGGA.

Thr184 contributes to the Mg(2+) binding site. 2 residues coordinate ATP: Val231 and Trp234. Tetradecanoyl-AMP is bound by residues Gly302, Gln322, Gly323, and Thr327. Positions 323 and 327 each coordinate ATP. A Mg(2+)-binding site is contributed by Glu328. Asp418, Lys435, Lys439, and Trp444 together coordinate ATP. 3 residues coordinate tetradecanoyl-AMP: Asp418, Lys435, and Lys439.

Belongs to the ATP-dependent AMP-binding enzyme family. Forms a domain swapped homodimer. Mg(2+) serves as cofactor.

The enzyme catalyses a long-chain fatty acid + ATP + CoA = a long-chain fatty acyl-CoA + AMP + diphosphate. The catalysed reaction is tetradecanoate + ATP + CoA = tetradecanoyl-CoA + AMP + diphosphate. It carries out the reaction hexadecanoate + ATP + CoA = hexadecanoyl-CoA + AMP + diphosphate. It participates in lipid metabolism; fatty acid metabolism. In terms of biological role, catalyzes the esterification of a number of long chain fatty acids with CoA, resulting in the formation of long-chain fatty acyl-CoA. Myristate (C14) is the most efficiently processed fatty acid, followed by palmitate (C16). Also catalyzes the esterification of stearate (C18) and laurate (C12), but at lower efficiency. Does not catalyze the esterification of the unsaturated fatty acids mysteroleic and palmitoleic acids in vitro. The sequence is that of Long-chain-fatty-acid--CoA ligase from Thermus thermophilus (strain ATCC 27634 / DSM 579 / HB8).